A 177-amino-acid chain; its full sequence is Large ribosomal subunit protein uL6 (177 aa).

It belongs to the universal ribosomal protein uL6 family. In terms of assembly, part of the 50S ribosomal subunit.

This protein binds to the 23S rRNA, and is important in its secondary structure. It is located near the subunit interface in the base of the L7/L12 stalk, and near the tRNA binding site of the peptidyltransferase center. This chain is Large ribosomal subunit protein uL6, found in Mesorhizobium japonicum (strain LMG 29417 / CECT 9101 / MAFF 303099) (Mesorhizobium loti (strain MAFF 303099)).